The following is a 357-amino-acid chain: Putative DENN domain-containing protein 10 B (357 aa).

The uDENN domain maps to 1-140; it reads MAAAELADTQ…TKGICQSEEN (140 aa). Positions 159–299 constitute a cDENN domain; the sequence is IKDIVSQFGM…PEKSESQVIQ (141 aa). The region spanning 301–357 is the dDENN domain; sequence IALKTREIFTNLAPFSEVSADGEKRVLNLEALKQKRFPPATENFLYHLAAAEQMLKI.

This sequence belongs to the DENND10 family.

It is found in the late endosome. Its function is as follows. May be a guanine nucleotide exchange factor (GEF). The sequence is that of Putative DENN domain-containing protein 10 B from Homo sapiens (Human).